The sequence spans 278 residues: 4-deoxy-L-threo-5-hexosulose-uronate ketol-isomerase (278 aa).

Positions 196, 198, 203, and 245 each coordinate Zn(2+).

Belongs to the KduI family. It depends on Zn(2+) as a cofactor.

It catalyses the reaction 5-dehydro-4-deoxy-D-glucuronate = 3-deoxy-D-glycero-2,5-hexodiulosonate. It participates in glycan metabolism; pectin degradation; 2-dehydro-3-deoxy-D-gluconate from pectin: step 4/5. Functionally, catalyzes the isomerization of 5-dehydro-4-deoxy-D-glucuronate to 3-deoxy-D-glycero-2,5-hexodiulosonate. This is 4-deoxy-L-threo-5-hexosulose-uronate ketol-isomerase from Paraburkholderia phytofirmans (strain DSM 17436 / LMG 22146 / PsJN) (Burkholderia phytofirmans).